Here is a 575-residue protein sequence, read N- to C-terminus: Acyloxyacyl hydrolase (575 aa).

Positions 1 to 25 (MKSPWRILVVSPLLLLPLHSSTSRA) are cleaved as a signal peptide. The propeptide occupies 26–34 (HDNQPGTIR). The 82-residue stretch at 36–117 (DHYTCVGCVL…HTLEFCKQEP (82 aa)) folds into the Saposin B-type domain. The interval 37-69 (HYTCVGCVLVVSVIEQLAQVHNSTVQASMERLC) is important for enzyme activity, localization to cytoplasmic vesicles, and protein stability. Intrachain disulfides connect C40/C113, C43/C107, C69/C82, C122/C453, C159/C168, C205/C229, C248/C328, and C375/C459. N58 carries an N-linked (GlcNAc...) asparagine glycan. Residues 172–176 (KLAIK) are lipopolysaccharide binding. Positions 183, 185, 187, 189, 204, 206, 207, 209, 212, 222, 226, 228, 230, 232, and 244 each coordinate Ca(2+). An N-linked (GlcNAc...) asparagine glycan is attached at N206. S262 is a catalytic residue. The N-linked (GlcNAc...) asparagine glycan is linked to N466.

As to quaternary structure, heterodimer of the large and small subunits; disulfide-linked. Ca(2+) serves as cofactor. In terms of processing, cleaved into a large and a small subunit. The small subunit is N-glycosylated.

The protein resides in the secreted. Its subcellular location is the cytoplasmic vesicle. It catalyses the reaction a 3-(acyloxy)acyl derivative of bacterial toxin + H2O = a 3-hydroxyacyl derivative of bacterial toxin + a fatty acid + H(+). Removes the secondary (acyloxyacyl-linked) fatty acyl chains from the lipid A region of bacterial lipopolysaccharides (LPS). By breaking down LPS, terminates the host response to bacterial infection and prevents prolonged and damaging inflammatory responses. In peritoneal macrophages, seems to be important for recovery from a state of immune tolerance following infection by Gram-negative bacteria. This chain is Acyloxyacyl hydrolase, found in Oryctolagus cuniculus (Rabbit).